A 218-amino-acid chain; its full sequence is Molybdenum cofactor guanylyltransferase (218 aa).

Residues 16-18, Lys28, Asn56, Asp74, and Asp109 each bind GTP; that span reads LAG. Asp109 contacts Mg(2+).

The protein belongs to the MobA family. As to quaternary structure, monomer. The cofactor is Mg(2+).

Its subcellular location is the cytoplasm. The enzyme catalyses Mo-molybdopterin + GTP + H(+) = Mo-molybdopterin guanine dinucleotide + diphosphate. Transfers a GMP moiety from GTP to Mo-molybdopterin (Mo-MPT) cofactor (Moco or molybdenum cofactor) to form Mo-molybdopterin guanine dinucleotide (Mo-MGD) cofactor. This Sinorhizobium fredii (strain NBRC 101917 / NGR234) protein is Molybdenum cofactor guanylyltransferase.